We begin with the raw amino-acid sequence, 508 residues long: UDP-N-acetylmuramoyl-L-alanyl-D-glutamate--2,6-diaminopimelate ligase (508 aa).

A UDP-N-acetyl-alpha-D-muramoyl-L-alanyl-D-glutamate-binding site is contributed by Ser-33. Position 121 to 127 (Gly-121 to Thr-127) interacts with ATP. Residues Asn-162, Thr-163–Thr-164, Ser-190, Gln-196, and Arg-198 contribute to the UDP-N-acetyl-alpha-D-muramoyl-L-alanyl-D-glutamate site. The residue at position 230 (Lys-230) is an N6-carboxylysine. Meso-2,6-diaminopimelate contacts are provided by residues Arg-399, Asp-423–Arg-426, Gly-474, and Glu-478. Positions Asp-423–Arg-426 match the Meso-diaminopimelate recognition motif motif.

It belongs to the MurCDEF family. MurE subfamily. Mg(2+) serves as cofactor. Post-translationally, carboxylation is probably crucial for Mg(2+) binding and, consequently, for the gamma-phosphate positioning of ATP.

The protein localises to the cytoplasm. It catalyses the reaction UDP-N-acetyl-alpha-D-muramoyl-L-alanyl-D-glutamate + meso-2,6-diaminopimelate + ATP = UDP-N-acetyl-alpha-D-muramoyl-L-alanyl-gamma-D-glutamyl-meso-2,6-diaminopimelate + ADP + phosphate + H(+). It participates in cell wall biogenesis; peptidoglycan biosynthesis. Its function is as follows. Catalyzes the addition of meso-diaminopimelic acid to the nucleotide precursor UDP-N-acetylmuramoyl-L-alanyl-D-glutamate (UMAG) in the biosynthesis of bacterial cell-wall peptidoglycan. This Buchnera aphidicola subsp. Baizongia pistaciae (strain Bp) protein is UDP-N-acetylmuramoyl-L-alanyl-D-glutamate--2,6-diaminopimelate ligase.